A 271-amino-acid polypeptide reads, in one-letter code: Dermonecrotic toxin LhSicTox-alphaIA2bv (271 aa).

His3 is an active-site residue. Mg(2+) contacts are provided by Glu23 and Asp25. Intrachain disulfides connect Cys43–Cys49 and Cys45–Cys188. Position 83 (Asp83) interacts with Mg(2+).

The protein belongs to the arthropod phospholipase D family. Class II subfamily. Mg(2+) serves as cofactor. In terms of tissue distribution, expressed by the venom gland.

It is found in the secreted. The catalysed reaction is an N-(acyl)-sphingosylphosphocholine = an N-(acyl)-sphingosyl-1,3-cyclic phosphate + choline. It catalyses the reaction an N-(acyl)-sphingosylphosphoethanolamine = an N-(acyl)-sphingosyl-1,3-cyclic phosphate + ethanolamine. The enzyme catalyses a 1-acyl-sn-glycero-3-phosphocholine = a 1-acyl-sn-glycero-2,3-cyclic phosphate + choline. It carries out the reaction a 1-acyl-sn-glycero-3-phosphoethanolamine = a 1-acyl-sn-glycero-2,3-cyclic phosphate + ethanolamine. Dermonecrotic toxins cleave the phosphodiester linkage between the phosphate and headgroup of certain phospholipids (sphingolipid and lysolipid substrates), forming an alcohol (often choline) and a cyclic phosphate. This toxin acts on sphingomyelin (SM). It may also act on ceramide phosphoethanolamine (CPE), lysophosphatidylcholine (LPC) and lysophosphatidylethanolamine (LPE), but not on lysophosphatidylserine (LPS), and lysophosphatidylglycerol (LPG). It acts by transphosphatidylation, releasing exclusively cyclic phosphate products as second products. Induces dermonecrosis, hemolysis, increased vascular permeability, edema, inflammatory response, and platelet aggregation. The polypeptide is Dermonecrotic toxin LhSicTox-alphaIA2bv (Loxosceles hirsuta (Recluse spider)).